Here is a 435-residue protein sequence, read N- to C-terminus: rRNA methyltransferase 3A, mitochondrial (435 aa).

The N-terminal 42 residues, 1 to 42, are a transit peptide targeting the mitochondrion; the sequence is MAALMYNVSRGLVMLGERSLFQRERYQILVNSRRFLRGLRRR. A compositionally biased stretch (polar residues) spans 314–324; sequence KQLVSGQTENV. A disordered region spans residues 314-351; it reads KQLVSGQTENVSSDDYSESDSDDDDDEEEDEDSLPHVK. Positions 328–345 are enriched in acidic residues; that stretch reads DYSESDSDDDDDEEEDED. Residues G369 and L402 each coordinate S-adenosyl-L-methionine.

This sequence belongs to the class IV-like SAM-binding methyltransferase superfamily. RNA methyltransferase TrmH family.

The protein resides in the mitochondrion. The enzyme catalyses a uridine in rRNA + S-adenosyl-L-methionine = a 2'-O-methyluridine in rRNA + S-adenosyl-L-homocysteine + H(+). Functionally, S-adenosyl-L-methionine-dependent 2'-O-ribose methyltransferase that catalyzes the formation of 2'-O-methylguanosine at position 1485 (Gm1485) in the mitochondrial large subunit ribosomal RNA (mtLSU rRNA), a conserved modification in the peptidyl transferase domain of the mtLSU rRNA. Also required for formation of 2'-O-methyluridine at position 1484 (Um1484) mediated by MRM2. In Danio rerio (Zebrafish), this protein is rRNA methyltransferase 3A, mitochondrial (mrm3a).